The following is a 362-amino-acid chain: tRNA N6-adenosine threonylcarbamoyltransferase (362 aa).

Fe cation is bound by residues H120 and H124. Residues 142–146, D175, G188, and N288 each bind substrate; that span reads LASGG. A Fe cation-binding site is contributed by D316. Residues 342–351 are compositionally biased toward basic and acidic residues; it reads RPRWPLDPDA. The interval 342-362 is disordered; it reads RPRWPLDPDAPKAAGAGGVKA.

This sequence belongs to the KAE1 / TsaD family. Fe(2+) is required as a cofactor.

It localises to the cytoplasm. It carries out the reaction L-threonylcarbamoyladenylate + adenosine(37) in tRNA = N(6)-L-threonylcarbamoyladenosine(37) in tRNA + AMP + H(+). In terms of biological role, required for the formation of a threonylcarbamoyl group on adenosine at position 37 (t(6)A37) in tRNAs that read codons beginning with adenine. Is involved in the transfer of the threonylcarbamoyl moiety of threonylcarbamoyl-AMP (TC-AMP) to the N6 group of A37, together with TsaE and TsaB. TsaD likely plays a direct catalytic role in this reaction. The protein is tRNA N6-adenosine threonylcarbamoyltransferase of Rhodospirillum rubrum (strain ATCC 11170 / ATH 1.1.1 / DSM 467 / LMG 4362 / NCIMB 8255 / S1).